Reading from the N-terminus, the 66-residue chain is Large ribosomal subunit protein bL35 (66 aa).

The span at 1 to 16 (MPKQKTHRASAKRFKR) shows a compositional bias: basic residues. The disordered stretch occupies residues 1 to 21 (MPKQKTHRASAKRFKRTGSGG).

This sequence belongs to the bacterial ribosomal protein bL35 family.

The chain is Large ribosomal subunit protein bL35 from Streptococcus gordonii (strain Challis / ATCC 35105 / BCRC 15272 / CH1 / DL1 / V288).